The primary structure comprises 232 residues: Uracil-DNA glycosylase (232 aa).

Asp66 serves as the catalytic Proton acceptor.

Belongs to the uracil-DNA glycosylase (UDG) superfamily. UNG family.

The protein localises to the cytoplasm. The catalysed reaction is Hydrolyzes single-stranded DNA or mismatched double-stranded DNA and polynucleotides, releasing free uracil.. Its function is as follows. Excises uracil residues from the DNA which can arise as a result of misincorporation of dUMP residues by DNA polymerase or due to deamination of cytosine. The polypeptide is Uracil-DNA glycosylase (Lactobacillus acidophilus (strain ATCC 700396 / NCK56 / N2 / NCFM)).